A 219-amino-acid chain; its full sequence is Inner membrane protein YghB (219 aa).

The Cytoplasmic segment spans residues 1–17 (MAVIQDIIAALWQHDFA). The helical transmembrane segment at 18-38 (ALANPHVVSVVYFVMFATLFL) threads the bilayer. At 39 to 67 (ENGLLPASFLPGDSLLLLAGALIAQDVMH) the chain is on the periplasmic side. The chain crosses the membrane as a helical span at residues 68 to 88 (FLPTIGILTAAASLGCWLSYI). The Cytoplasmic segment spans residues 89–160 (QGRWLGNTRT…RRFQFFNWLS (72 aa)). The helical transmembrane segment at 161 to 181 (GLLWVTVVTSFGYALSMIPFV) threads the bilayer. The Periplasmic segment spans residues 182–191 (KRHEDQVMTF). Residues 192–212 (LMILPVALLVAGLLGTLVVVI) traverse the membrane as a helical segment. The Cytoplasmic portion of the chain corresponds to 213 to 219 (KKKYCNA).

This sequence belongs to the DedA family.

Its subcellular location is the cell inner membrane. The sequence is that of Inner membrane protein YghB (yghB) from Salmonella typhimurium (strain LT2 / SGSC1412 / ATCC 700720).